Here is a 427-residue protein sequence, read N- to C-terminus: Serine hydroxymethyltransferase (427 aa).

G120 to I122 lines the (6S)-5,6,7,8-tetrahydrofolate pocket. K226 carries the N6-(pyridoxal phosphate)lysine modification.

The protein belongs to the SHMT family. Homodimer. Pyridoxal 5'-phosphate is required as a cofactor.

The protein localises to the cytoplasm. It participates in amino-acid biosynthesis; glycine biosynthesis; glycine from L-serine: step 1/1. Catalyzes the reversible interconversion of serine and glycine with a modified folate serving as the one-carbon carrier. Also exhibits a pteridine-independent aldolase activity toward beta-hydroxyamino acids, producing glycine and aldehydes, via a retro-aldol mechanism. The sequence is that of Serine hydroxymethyltransferase from Pyrococcus horikoshii (strain ATCC 700860 / DSM 12428 / JCM 9974 / NBRC 100139 / OT-3).